A 239-amino-acid polypeptide reads, in one-letter code: Endonuclease V (239 aa).

Mg(2+)-binding residues include Asp-48 and Asp-116.

This sequence belongs to the endonuclease V family. The cofactor is Mg(2+).

The protein resides in the cytoplasm. The enzyme catalyses Endonucleolytic cleavage at apurinic or apyrimidinic sites to products with a 5'-phosphate.. Its function is as follows. DNA repair enzyme involved in the repair of deaminated bases. Selectively cleaves double-stranded DNA at the second phosphodiester bond 3' to a deoxyinosine leaving behind the intact lesion on the nicked DNA. In Xanthomonas oryzae pv. oryzae (strain MAFF 311018), this protein is Endonuclease V.